A 131-amino-acid chain; its full sequence is Phosphoribosyl-AMP cyclohydrolase (131 aa).

Mg(2+) is bound at residue Asp-89. Cys-90 contributes to the Zn(2+) binding site. Positions 91 and 93 each coordinate Mg(2+). 2 residues coordinate Zn(2+): Cys-106 and Cys-113.

The protein belongs to the PRA-CH family. As to quaternary structure, homodimer. Mg(2+) serves as cofactor. The cofactor is Zn(2+).

The protein resides in the cytoplasm. It carries out the reaction 1-(5-phospho-beta-D-ribosyl)-5'-AMP + H2O = 1-(5-phospho-beta-D-ribosyl)-5-[(5-phospho-beta-D-ribosylamino)methylideneamino]imidazole-4-carboxamide. The protein operates within amino-acid biosynthesis; L-histidine biosynthesis; L-histidine from 5-phospho-alpha-D-ribose 1-diphosphate: step 3/9. Catalyzes the hydrolysis of the adenine ring of phosphoribosyl-AMP. This is Phosphoribosyl-AMP cyclohydrolase from Bifidobacterium longum (strain DJO10A).